The chain runs to 711 residues: Polyribonucleotide nucleotidyltransferase (711 aa).

Mg(2+) is bound by residues D486 and D492. The KH domain occupies 553–612; that stretch reads PRIHTIKINPDKIKDVIGKGGSVIRALTEETGTTIEIEDDGTVKIAATDGEKAKHAIRRI. The region spanning 622–690 is the S1 motif domain; that stretch reads GRVYTGKVTR…RQGRIRLSIK (69 aa). Positions 689-711 are disordered; sequence IKEATEQSQPAAAPEAPAAEQGE. The span at 694–711 shows a compositional bias: low complexity; it reads EQSQPAAAPEAPAAEQGE.

Belongs to the polyribonucleotide nucleotidyltransferase family. Component of the RNA degradosome, which is a multiprotein complex involved in RNA processing and mRNA degradation. Mg(2+) is required as a cofactor.

Its subcellular location is the cytoplasm. The enzyme catalyses RNA(n+1) + phosphate = RNA(n) + a ribonucleoside 5'-diphosphate. Functionally, involved in mRNA degradation. Catalyzes the phosphorolysis of single-stranded polyribonucleotides processively in the 3'- to 5'-direction. The chain is Polyribonucleotide nucleotidyltransferase from Shigella flexneri serotype 5b (strain 8401).